A 208-amino-acid chain; its full sequence is Redox-sensing transcriptional repressor Rex (208 aa).

Positions 16 to 55 form a DNA-binding region, H-T-H motif; the sequence is VYSRYLENLYRKGITTVSSADIAQGVGVTSAQVRKDLAYF. 90–95 is an NAD(+) binding site; the sequence is GAGNLG.

Belongs to the transcriptional regulatory Rex family. In terms of assembly, homodimer.

Its subcellular location is the cytoplasm. In terms of biological role, modulates transcription in response to changes in cellular NADH/NAD(+) redox state. This chain is Redox-sensing transcriptional repressor Rex, found in Carboxydothermus hydrogenoformans (strain ATCC BAA-161 / DSM 6008 / Z-2901).